Consider the following 170-residue polypeptide: uncharacterized protein (170 aa).

A helical membrane pass occupies residues Phe-96–Asp-116.

The protein localises to the membrane. This is an uncharacterized protein from Borreliella burgdorferi (strain ATCC 35210 / DSM 4680 / CIP 102532 / B31) (Borrelia burgdorferi).